Here is a 228-residue protein sequence, read N- to C-terminus: HGFVQNIVIDGKNYGGYLVNQYPYMSNPPEVIAWSTTATDLGFVDGTGYQTPDIICHRGAKPGALTAPVSPGGTVELQWTPWPDSHHGPVINYLAPCNGDCSTVDKTQLEFFKIAESGLINDDNPPGIWASDNLIAANNSWTVTIPTTIAPGNYVLRHEIIALHSAQNQDGAQNYPQCINLQVTGGGSDNPAGTLGTALYHDTDPGILINIYQKLSSYIIPGPPLYTG.

His1 and His86 together coordinate Cu(2+). At His1 the chain carries Methylhistidine. Disulfide bonds link Cys56–Cys178 and Cys97–Cys101. The N-linked (GlcNAc...) asparagine glycan is linked to Asn138. The O2 site is built by His164 and Gln173. Tyr175 lines the Cu(2+) pocket.

Belongs to the polysaccharide monooxygenase AA9 family. It depends on Cu(2+) as a cofactor. The catalytically essential N-terminal histidine His-22 is post-translationally modified by methylation to prevent protonation of the histidine side chain, and protect the critical active site of the enzyme from oxidative damage.

It localises to the secreted. The enzyme catalyses [(1-&gt;4)-beta-D-glucosyl]n+m + reduced acceptor + O2 = 4-dehydro-beta-D-glucosyl-[(1-&gt;4)-beta-D-glucosyl]n-1 + [(1-&gt;4)-beta-D-glucosyl]m + acceptor + H2O.. Its activity is regulated as follows. Small amounts of H(2)O(2) boost LPMO activity, while higher amounts lead to inactivation of the enzyme. Its function is as follows. Lytic polysaccharide monooxygenase (LPMO) that depolymerizes crystalline and amorphous polysaccharides via the oxidation of scissile alpha- or beta-(1-4)-glycosidic bonds, yielding C1 and C4 oxidation product. Catalysis by LPMOs requires the reduction of the active-site copper from Cu(II) to Cu(I) by a reducing agent and H(2)O(2) or O(2) as a cosubstrate. Is able to cleave cellulose and xylan to produce C1- and C4-oxidized products. The chain is AA9 family lytic polysaccharide monooxygenase A from Thermoascus aurantiacus.